The following is a 312-amino-acid chain: D-alanine--D-alanine ligase (312 aa).

The 201-residue stretch at 108-308 folds into the ATP-grasp domain; it reads KLVWQQTGIP…YSELVVKVLS (201 aa). Residue 138–193 coordinates ATP; that stretch reads VAKLGVPLFVKPASEGSSVAVEKVKSADALPAALEEAAKHDKIVIVEKSIEGGGEY. Asp262, Glu275, and Asn277 together coordinate Mg(2+).

It belongs to the D-alanine--D-alanine ligase family. It depends on Mg(2+) as a cofactor. The cofactor is Mn(2+).

The protein localises to the cytoplasm. The enzyme catalyses 2 D-alanine + ATP = D-alanyl-D-alanine + ADP + phosphate + H(+). It functions in the pathway cell wall biogenesis; peptidoglycan biosynthesis. Functionally, cell wall formation. This chain is D-alanine--D-alanine ligase, found in Burkholderia mallei (strain NCTC 10247).